The following is a 219-amino-acid chain: Ribose-5-phosphate isomerase A (219 aa).

Substrate contacts are provided by residues 28–31, 81–84, and 94–97; these read SGST, DGAD, and KGGG. The active-site Proton acceptor is the E103. K121 contacts substrate.

This sequence belongs to the ribose 5-phosphate isomerase family. Homodimer.

It carries out the reaction aldehydo-D-ribose 5-phosphate = D-ribulose 5-phosphate. It participates in carbohydrate degradation; pentose phosphate pathway; D-ribose 5-phosphate from D-ribulose 5-phosphate (non-oxidative stage): step 1/1. Functionally, catalyzes the reversible conversion of ribose-5-phosphate to ribulose 5-phosphate. The protein is Ribose-5-phosphate isomerase A of Mannheimia succiniciproducens (strain KCTC 0769BP / MBEL55E).